Here is a 92-residue protein sequence, read N- to C-terminus: Probable glutathione transferase (92 aa).

Residues 1–71 (RTCPYAQRAR…YLEEAFPDPP (71 aa)) enclose the GST N-terminal domain. Residue C3 is the Nucleophile of the active site. Glutathione is bound by residues K30, V43, and 55 to 56 (ES).

The protein belongs to the GST superfamily. Omega family.

It carries out the reaction RX + glutathione = an S-substituted glutathione + a halide anion + H(+). It catalyses the reaction L-dehydroascorbate + 2 glutathione = glutathione disulfide + L-ascorbate. The enzyme catalyses methylarsonate + 2 glutathione + H(+) = methylarsonous acid + glutathione disulfide + H2O. Exhibits glutathione-dependent thiol transferase activity. Has dehydroascorbate reductase activity and may contribute to the recycling of ascorbic acid. Participates in the biotransformation of inorganic arsenic and reduces monomethylarsonic acid (MMA). The sequence is that of Probable glutathione transferase from Aplysia californica (California sea hare).